Consider the following 103-residue polypeptide: Carboxysome shell protein CcmK3 (103 aa).

In terms of domain architecture, BMC spans 4 to 91; the sequence is AVGVIQTLGF…PPENVLAVLP (88 aa).

This sequence belongs to the bacterial microcompartments protein family. CcmK subfamily. In terms of assembly, forms mixed heterohexamers with CcmK4, probably with 1:5 CcmK3:CcmK4 stoichiometry. Only very weak interactions with CcmK1 and CcmK2 were seen. Bulky residues in the pore region probably preclude the formation of homohexamers by this subunit.

Its subcellular location is the carboxysome. In terms of biological role, a probably minor shell protein component of the carboxysome, a polyhedral inclusion where RuBisCO (ribulose bisphosphate carboxylase, rbcL-rbcS) is sequestered. This subunit probably does not form homohexamers. This Synechocystis sp. (strain ATCC 27184 / PCC 6803 / Kazusa) protein is Carboxysome shell protein CcmK3.